The chain runs to 398 residues: S-adenosylmethionine synthase (398 aa).

Histidine 16 contributes to the ATP binding site. Position 18 (aspartate 18) interacts with Mg(2+). Residue glutamate 51 participates in K(+) binding. L-methionine contacts are provided by glutamate 64 and glutamine 108. The interval 108 to 118 (QSADIAQGVDA) is flexible loop. Residues 176–178 (DSK), 242–243 (KF), aspartate 251, 257–258 (RK), alanine 274, and lysine 278 contribute to the ATP site. Aspartate 251 contributes to the L-methionine binding site. Residue lysine 282 coordinates L-methionine.

The protein belongs to the AdoMet synthase family. As to quaternary structure, homotetramer; dimer of dimers. It depends on Mg(2+) as a cofactor. The cofactor is K(+).

Its subcellular location is the cytoplasm. The catalysed reaction is L-methionine + ATP + H2O = S-adenosyl-L-methionine + phosphate + diphosphate. Its pathway is amino-acid biosynthesis; S-adenosyl-L-methionine biosynthesis; S-adenosyl-L-methionine from L-methionine: step 1/1. Its function is as follows. Catalyzes the formation of S-adenosylmethionine (AdoMet) from methionine and ATP. The overall synthetic reaction is composed of two sequential steps, AdoMet formation and the subsequent tripolyphosphate hydrolysis which occurs prior to release of AdoMet from the enzyme. This chain is S-adenosylmethionine synthase, found in Rhodopseudomonas palustris (strain HaA2).